Here is a 333-residue protein sequence, read N- to C-terminus: Transmembrane protein I329L (333 aa).

Residues 1-31 form the signal peptide; it reads MLRVFIFFVFLGSGLTGRIKPQITCKYFISE. N-linked (GlcNAc...) asparagine; by host glycans are attached at residues Asn32, Asn39, Asn44, Asn76, Asn82, and Asn101. Topologically, residues 32-239 are extracellular; sequence NNTWYKYNVT…NTERYKSCYP (208 aa). The LRR repeat unit spans residues 112–133; sequence ELKFLDLRYNDLQVIEYNILRK. Residues Asn181, Asn185, and Asn219 are each glycosylated (N-linked (GlcNAc...) asparagine; by host). Cys195 and Cys237 are joined by a disulfide. Residues 240 to 260 traverse the membrane as a helical segment; that stretch reads LVFISILCSCISFLFLFICLL. The Cytoplasmic portion of the chain corresponds to 261–333; that stretch reads RSICKKYSCT…EKKVSCSRRK (73 aa).

The protein belongs to the asfivirus I329L family. In terms of processing, highly glycosylated.

It is found in the host endoplasmic reticulum membrane. It localises to the host Golgi apparatus membrane. Functionally, viral TLR3 homolog that probably prevents TLR3 dimerization and subsequent induction of IFN. Inhibits dsRNA-stimulated activation of NF-kB and IRF3. The chain is Transmembrane protein I329L from Ornithodoros (relapsing fever ticks).